We begin with the raw amino-acid sequence, 316 residues long: Apolipoprotein E (316 aa).

Residues 1-18 form the signal peptide; that stretch reads MKVLWVALVITLLAGCQA. 8 tandem repeats follow at residues 79–100, 101–122, 123–144, 145–166, 167–188, 189–210, 211–232, and 233–254. Residues 79-254 form an 8 X 22 AA approximate tandem repeats region; the sequence is VLMDETMKEV…HLEEMREQLE (176 aa). Methionine 142 is subject to Methionine sulfoxide. The segment at 157-167 is LDL and other lipoprotein receptors binding; the sequence is HLRKLRKRLLR. A heparin-binding site is contributed by 161 to 164; it reads LRKR. The interval 209-289 is lipid-binding and lipoprotein association; that stretch reads AATVGTLASQ…SWFEPLVEDM (81 aa). 228–235 is a heparin binding site; it reads HQKLRGRV. The tract at residues 265–316 is homooligomerization; the sequence is SQMRLQAEAFQARLKSWFEPLVEDMQRQWAGLVEKVQLAMATSSTSAPSENH. The tract at residues 277–289 is specificity for association with VLDL; that stretch reads RLKSWFEPLVEDM.

This sequence belongs to the apolipoprotein A1/A4/E family. Homotetramer. May interact with ABCA1; functionally associated with ABCA1 in the biogenesis of HDLs. May interact with APP/A4 amyloid-beta peptide; the interaction is extremely stable in vitro but its physiological significance is unclear. May interact with MAPT. May interact with MAP2. In the cerebrospinal fluid, interacts with secreted SORL1. Interacts with PMEL; this allows the loading of PMEL luminal fragment on ILVs to induce fibril nucleation. In terms of processing, APOE exists as multiple glycosylated and sialylated glycoforms within cells and in plasma. The extent of glycosylation and sialylation are tissue and context specific. Glycated in plasma VLDL. Post-translationally, phosphorylated by FAM20C in the extracellular medium.

The protein localises to the secreted. The protein resides in the extracellular space. Its subcellular location is the extracellular matrix. It is found in the extracellular vesicle. It localises to the endosome. The protein localises to the multivesicular body. Its function is as follows. APOE is an apolipoprotein, a protein associating with lipid particles, that mainly functions in lipoprotein-mediated lipid transport between organs via the plasma and interstitial fluids. APOE is a core component of plasma lipoproteins and is involved in their production, conversion and clearance. Apolipoproteins are amphipathic molecules that interact both with lipids of the lipoprotein particle core and the aqueous environment of the plasma. As such, APOE associates with chylomicrons, chylomicron remnants, very low density lipoproteins (VLDL) and intermediate density lipoproteins (IDL) but shows a preferential binding to high-density lipoproteins (HDL). It also binds a wide range of cellular receptors including the LDL receptor/LDLR and the very low-density lipoprotein receptor/VLDLR that mediate the cellular uptake of the APOE-containing lipoprotein particles. Finally, APOE also has a heparin-binding activity and binds heparan-sulfate proteoglycans on the surface of cells, a property that supports the capture and the receptor-mediated uptake of APOE-containing lipoproteins by cells. In Lipotes vexillifer (Yangtze river dolphin), this protein is Apolipoprotein E (APOE).